A 660-amino-acid polypeptide reads, in one-letter code: Phosphatidylinositol-3-phosphate phosphatase MTMR7 (660 aa).

One can recognise a Myotubularin phosphatase domain in the interval 126-504 (GWLLVDLSEE…FTYKFWNGMY (379 aa)). A 1,2-diacyl-sn-glycero-3-phospho-(1D-myo-inositol-3-phosphate)-binding residues include N250, N275, and I276. The Phosphocysteine intermediate role is filled by C338. 7 residues coordinate a 1,2-diacyl-sn-glycero-3-phospho-(1D-myo-inositol-3-phosphate): S339, D340, G341, W342, D343, R344, and R384. Residues 514 to 548 (RQSVTDYLMAVKEESQQLEEELESLEERLEKIQKV) are a coiled coil. Positions 550 to 660 (LHGTKVKSKQ…DSDEAVFLTA (111 aa)) are disordered. Polar residues predominate over residues 566–596 (SGFSTSDHSTANTPQDYSGNSKSFPSRSPSQ). T578 carries the post-translational modification Phosphothreonine. A compositionally biased stretch (basic and acidic residues) spans 641–653 (APSEDSGKDRDSD).

Belongs to the protein-tyrosine phosphatase family. Non-receptor class myotubularin subfamily. As to quaternary structure, heterodimer (via C-terminus) with MTMR9 (via coiled coil domain); the interaction enhances MTMR7 catalytic activity. Does not homodimerize. Interacts with RAB1B (in GDP-bound form). Highly expressed in brain (at protein level). Expressed at low levels in liver, kidney and testis.

It localises to the cytoplasm. It is found in the endomembrane system. The catalysed reaction is a 1,2-diacyl-sn-glycero-3-phospho-(1D-myo-inositol-3-phosphate) + H2O = a 1,2-diacyl-sn-glycero-3-phospho-(1D-myo-inositol) + phosphate. The enzyme catalyses 1D-myo-inositol 1,3-bisphosphate + H2O = 1D-myo-inositol 1-phosphate + phosphate. Interaction with MTMR9 increases phosphatase activity. Functionally, lipid phosphatase that specifically dephosphorylates the D-3 position of phosphatidylinositol 3-phosphate (PtdIns(3)P) and inositol 1,3-bisphosphate (Ins(1,3)P2). This chain is Phosphatidylinositol-3-phosphate phosphatase MTMR7, found in Mus musculus (Mouse).